A 284-amino-acid chain; its full sequence is RNase adapter protein RapZ (284 aa).

An ATP-binding site is contributed by 8-15 (GRSGSGKS). 56-59 (DVRN) contacts GTP. The interval 266–284 (RSRGKNVQSRHRTLEKRKQ) is RNA-binding.

This sequence belongs to the RapZ-like family. RapZ subfamily. Homotrimer.

Functionally, modulates the synthesis of GlmS, by affecting the processing and stability of the regulatory small RNA GlmZ. When glucosamine-6-phosphate (GlcN6P) concentrations are high in the cell, RapZ binds GlmZ and targets it to cleavage by RNase E. Consequently, GlmZ is inactivated and unable to activate GlmS synthesis. Under low GlcN6P concentrations, RapZ is sequestered and inactivated by an other regulatory small RNA, GlmY, preventing GlmZ degradation and leading to synthesis of GlmS. The polypeptide is RNase adapter protein RapZ (Serratia proteamaculans (strain 568)).